The chain runs to 581 residues: Tail sheath protein (581 aa).

The protein belongs to the myoviridae tail sheath protein family. Homomultimer.

It localises to the virion. The protein resides in the host cytoplasm. Functionally, polymerizes as an extended structure around the baseplate-tail tube complex. During ejection, the sheath shifts to a contracted form, thereby making the inner tail tube protrude through the host cell envelope. The protein is Tail sheath protein of Mycobacterium phage Bxz1 (Mycobacteriophage Bxz1).